Here is a 283-residue protein sequence, read N- to C-terminus: NFU1 iron-sulfur cluster scaffold homolog, mitochondrial (283 aa).

A mitochondrion-targeting transit peptide spans 1-65 (MSKFLSQAAI…ELRMPVACRR (65 aa)). A nifU region spans residues 182 to 250 (IKELLDTRIR…IPEVESVEQV (69 aa)). C219 and C222 together coordinate [4Fe-4S] cluster.

This sequence belongs to the NifU family.

Its subcellular location is the mitochondrion. Functionally, molecular scaffold for [Fe-S] cluster assembly of mitochondrial iron-sulfur proteins. This is NFU1 iron-sulfur cluster scaffold homolog, mitochondrial from Drosophila sechellia (Fruit fly).